A 784-amino-acid chain; its full sequence is Serine/threonine-protein kinase DCLK2 (784 aa).

A disordered region spans residues 1–45 (MASTRSIELEHFEERDKRPRPGSRRGAPSSSGGSSSSGPKGNGLI). A compositionally biased stretch (basic and acidic residues) spans 7–19 (IELEHFEERDKRP). Residues 24-39 (RRGAPSSSGGSSSSGP) are compositionally biased toward low complexity. Threonine 61 carries the phosphothreonine modification. 2 consecutive Doublecortin domains span residues 72-158 (KKAR…VDYT) and 197-280 (KLVT…AQDD). Composition is skewed to low complexity over residues 300 to 312 (AVKYSGSKSPGPS) and 341 to 364 (TPSSQLSTPKSTKSSSSSPTSPGS). The tract at residues 300–368 (AVKYSGSKSP…PTSPGSFRGL (69 aa)) is disordered. Phosphoserine is present on serine 379. A Protein kinase domain is found at 411–668 (YKIGKVIGDG…AGEILSHPWV (258 aa)). ATP contacts are provided by residues 417-425 (IGDGNFAVV) and lysine 440. The active-site Proton acceptor is the aspartate 532. Serine 664 bears the Phosphoserine mark. Phosphothreonine is present on threonine 683. The interval 724-784 (CQDSSRPGME…RAGTWRRHRD (61 aa)) is disordered. Residues 741–758 (SASAEEPPVSAPAAAPAP) are compositionally biased toward low complexity.

This sequence belongs to the protein kinase superfamily. CAMK Ser/Thr protein kinase family. CaMK subfamily. As to quaternary structure, binds to and stabilizes microtubules. Interacts with MAPK8IP1/JIP-1, MAPK8IP2/JIP-2, MAPK9/JNK2, PPP1R9B/NEURABIN-2 and actin. In terms of processing, autophosphorylated.

The protein resides in the cytoplasm. The protein localises to the cytoskeleton. It catalyses the reaction L-seryl-[protein] + ATP = O-phospho-L-seryl-[protein] + ADP + H(+). The catalysed reaction is L-threonyl-[protein] + ATP = O-phospho-L-threonyl-[protein] + ADP + H(+). In terms of biological role, protein kinase with a significantly reduced Ca(2+)/CAM affinity and dependence compared to other members of the CaMK family. May play a role in the down-regulation of CRE-dependent gene activation probably by phosphorylation of the CREB coactivator CRTC2/TORC2 and the resulting retention of TORC2 in the cytoplasm. This Ailuropoda melanoleuca (Giant panda) protein is Serine/threonine-protein kinase DCLK2 (DCLK2).